Reading from the N-terminus, the 247-residue chain is Lipoprotein-releasing system ATP-binding protein LolD 2 (247 aa).

An ABC transporter domain is found at 19-247 (LEARKLVKSY…QDGRLQACGG (229 aa)). 56–63 (GASGSGKT) provides a ligand contact to ATP.

Belongs to the ABC transporter superfamily. Lipoprotein translocase (TC 3.A.1.125) family. In terms of assembly, the complex is composed of two ATP-binding proteins (LolD) and two transmembrane proteins (LolC and LolE).

It is found in the cell inner membrane. Functionally, part of the ABC transporter complex LolCDE involved in the translocation of mature outer membrane-directed lipoproteins, from the inner membrane to the periplasmic chaperone, LolA. Responsible for the formation of the LolA-lipoprotein complex in an ATP-dependent manner. The chain is Lipoprotein-releasing system ATP-binding protein LolD 2 from Chlorobaculum tepidum (strain ATCC 49652 / DSM 12025 / NBRC 103806 / TLS) (Chlorobium tepidum).